A 207-amino-acid chain; its full sequence is dTTP/UTP pyrophosphatase (207 aa).

The active-site Proton acceptor is D87.

It belongs to the Maf family. YhdE subfamily. The cofactor is a divalent metal cation.

It is found in the cytoplasm. The enzyme catalyses dTTP + H2O = dTMP + diphosphate + H(+). The catalysed reaction is UTP + H2O = UMP + diphosphate + H(+). In terms of biological role, nucleoside triphosphate pyrophosphatase that hydrolyzes dTTP and UTP. May have a dual role in cell division arrest and in preventing the incorporation of modified nucleotides into cellular nucleic acids. The polypeptide is dTTP/UTP pyrophosphatase (Bordetella bronchiseptica (strain ATCC BAA-588 / NCTC 13252 / RB50) (Alcaligenes bronchisepticus)).